The chain runs to 594 residues: Protein HOTHEAD (594 aa).

The N-terminal stretch at 1–19 is a signal peptide; the sequence is MALKLFLFALLLCLPTSLS. An FAD-binding site is contributed by 64 to 91; it reads DYIVIGGGTAGCPLAATLSQNFSVLVLE. Residue His-529 is the Proton acceptor of the active site.

Belongs to the GMC oxidoreductase family. It depends on FAD as a cofactor. Expressed in roots, leaves, stems, inflorescences and siliques. Found not only in epidermis but also in all sub-epidermal cell layers.

Probable FAD-dependent enzyme. Involved in regulating post-genital organ fusion. Required to limit cellular interactions between contacting epidermal cells during floral development. This Arabidopsis thaliana (Mouse-ear cress) protein is Protein HOTHEAD (HTH).